The sequence spans 301 residues: Acetylglutamate kinase (301 aa).

Substrate-binding positions include 68–69 (GG), Arg90, and Asn195.

The protein belongs to the acetylglutamate kinase family. ArgB subfamily.

It is found in the cytoplasm. The enzyme catalyses N-acetyl-L-glutamate + ATP = N-acetyl-L-glutamyl 5-phosphate + ADP. Its pathway is amino-acid biosynthesis; L-arginine biosynthesis; N(2)-acetyl-L-ornithine from L-glutamate: step 2/4. Its function is as follows. Catalyzes the ATP-dependent phosphorylation of N-acetyl-L-glutamate. The sequence is that of Acetylglutamate kinase from Pseudomonas fluorescens (strain SBW25).